A 140-amino-acid chain; its full sequence is Lysozyme B (140 aa).

Residues 1 to 18 (MKAFIVLVALALAAPALG) form the signal peptide. In terms of domain architecture, C-type lysozyme spans 19 to 140 (RTMDRCSLAR…GWLPSIDDCF (122 aa)). 4 disulfides stabilise this stretch: C24–C139, C45–C129, C80–C96, and C92–C110. Residues E50 and D68 contribute to the active site.

This sequence belongs to the glycosyl hydrolase 22 family. In terms of tissue distribution, found in the midgut.

The enzyme catalyses Hydrolysis of (1-&gt;4)-beta-linkages between N-acetylmuramic acid and N-acetyl-D-glucosamine residues in a peptidoglycan and between N-acetyl-D-glucosamine residues in chitodextrins.. Its function is as follows. Unlikely to play an active role in the humoral immune defense. May have a function in the digestion of bacteria in the food. The chain is Lysozyme B (LysB) from Drosophila melanogaster (Fruit fly).